A 359-amino-acid polypeptide reads, in one-letter code: uncharacterized protein (359 aa).

This sequence belongs to the glycosyltransferase group 1 family. Glycosyltransferase 4 subfamily.

This is an uncharacterized protein from Bacillus subtilis (strain 168).